A 98-amino-acid chain; its full sequence is MIPGGLTEAKPATIEIQEIANMVKPQLEEKTNETYEEFTAIEYKSQVVAGINYYIKIQTGDNRYIHIKVFKSLPQQSHSLILTGYQVDKTKDDELAGF.

Position 1 is an N-acetylmethionine (Met1). The Secondary area of contact signature appears at 46-50 (QVVAG).

Belongs to the cystatin family.

It localises to the cytoplasm. This is an intracellular thiol proteinase inhibitor. The sequence is that of Cystatin-A (CSTA) from Bos taurus (Bovine).